The sequence spans 201 residues: NADH-quinone oxidoreductase subunit C (201 aa).

This sequence belongs to the complex I 30 kDa subunit family. NDH-1 is composed of 14 different subunits. Subunits NuoB, C, D, E, F, and G constitute the peripheral sector of the complex.

Its subcellular location is the cell inner membrane. The enzyme catalyses a quinone + NADH + 5 H(+)(in) = a quinol + NAD(+) + 4 H(+)(out). Functionally, NDH-1 shuttles electrons from NADH, via FMN and iron-sulfur (Fe-S) centers, to quinones in the respiratory chain. The immediate electron acceptor for the enzyme in this species is believed to be ubiquinone. Couples the redox reaction to proton translocation (for every two electrons transferred, four hydrogen ions are translocated across the cytoplasmic membrane), and thus conserves the redox energy in a proton gradient. In Dechloromonas aromatica (strain RCB), this protein is NADH-quinone oxidoreductase subunit C.